The sequence spans 463 residues: Fumarate hydratase class II (463 aa).

Residues 97–99 (SGT), 128–131 (HPND), 138–140 (SSN), and Thr-186 contribute to the substrate site. Catalysis depends on His-187, which acts as the Proton donor/acceptor. Ser-317 is an active-site residue. Residues Ser-318 and 323-325 (KVN) each bind substrate.

It belongs to the class-II fumarase/aspartase family. Fumarase subfamily. In terms of assembly, homotetramer.

Its subcellular location is the cytoplasm. It catalyses the reaction (S)-malate = fumarate + H2O. It functions in the pathway carbohydrate metabolism; tricarboxylic acid cycle; (S)-malate from fumarate: step 1/1. Functionally, involved in the TCA cycle. Catalyzes the stereospecific interconversion of fumarate to L-malate. This chain is Fumarate hydratase class II, found in Helicobacter pylori (strain J99 / ATCC 700824) (Campylobacter pylori J99).